Here is a 150-residue protein sequence, read N- to C-terminus: UPF0756 membrane protein HDEF_0364 (150 aa).

Helical transmembrane passes span 1 to 21, 28 to 48, 51 to 71, 88 to 108, and 123 to 143; these read MMFF…GLIS, ISVV…FPWV, YALK…IASG, ILGI…VSLM, and ILGV…AGLL.

This sequence belongs to the UPF0756 family.

It is found in the cell membrane. The polypeptide is UPF0756 membrane protein HDEF_0364 (Hamiltonella defensa subsp. Acyrthosiphon pisum (strain 5AT)).